A 438-amino-acid polypeptide reads, in one-letter code: Na(+)/H(+) antiporter NhaA (438 aa).

The next 11 helical transmembrane spans lie at 23–43 (FGGI…NSFV), 62–82 (FFIG…LFFL), 104–124 (SFPV…YFFL), 133–153 (GFGI…MLLG), 162–182 (VFLI…IALF), 185–205 (TNLK…LALL), 212–232 (SLIP…QSGI), 302–322 (FLAP…NAGV), 337–357 (LGVI…ITFI), 372–392 (WWHI…SMFI), and 410–430 (IAIL…LFLL).

The protein belongs to the NhaA Na(+)/H(+) (TC 2.A.33) antiporter family.

It is found in the cell inner membrane. It carries out the reaction Na(+)(in) + 2 H(+)(out) = Na(+)(out) + 2 H(+)(in). In terms of biological role, na(+)/H(+) antiporter that extrudes sodium in exchange for external protons. This is Na(+)/H(+) antiporter NhaA from Helicobacter acinonychis (strain Sheeba).